A 318-amino-acid polypeptide reads, in one-letter code: Dehydration-responsive element-binding protein 2E (318 aa).

Basic residues predominate over residues 1-15; the sequence is MESYGRKRAWKKGPT. The segment at 1 to 24 is disordered; sequence MESYGRKRAWKKGPTRGKGGPQNA. Positions 27 to 84 form a DNA-binding region, AP2/ERF; it reads EYRGVRQRTWGKWVAEIREPNKRTRLWLGSFATAEEAALAYDEAARRLYGPDAFLNLP. Residues 140 to 178 form a disordered region; the sequence is ELKNSSSSPTKPPPRTPTRANPPPPPLPTSSPCSTVTNS. The segment covering 149–168 has biased composition (pro residues); sequence TKPPPRTPTRANPPPPPLPT.

The protein belongs to the AP2/ERF transcription factor family. ERF subfamily.

The protein resides in the nucleus. Functionally, probable transcriptional activator that binds to the DNA sequence 5'-[AG]CCGAC-3' of the cis-acting dehydration-responsive element (DRE). The protein is Dehydration-responsive element-binding protein 2E (DREB2E) of Oryza sativa subsp. japonica (Rice).